The primary structure comprises 180 residues: Adenine phosphoribosyltransferase (180 aa).

Belongs to the purine/pyrimidine phosphoribosyltransferase family. As to quaternary structure, homodimer.

It is found in the cytoplasm. The catalysed reaction is AMP + diphosphate = 5-phospho-alpha-D-ribose 1-diphosphate + adenine. Its pathway is purine metabolism; AMP biosynthesis via salvage pathway; AMP from adenine: step 1/1. Its function is as follows. Catalyzes a salvage reaction resulting in the formation of AMP, that is energically less costly than de novo synthesis. This Actinobacillus succinogenes (strain ATCC 55618 / DSM 22257 / CCUG 43843 / 130Z) protein is Adenine phosphoribosyltransferase.